The sequence spans 471 residues: 7-dehydrocholesterol reductase (471 aa).

The next 8 helical transmembrane spans lie at 36 to 56, 95 to 115, 144 to 164, 173 to 193, 233 to 253, 262 to 282, 302 to 322, and 327 to 347; these read LVSV…FIMA, LYAL…DFCH, LQAW…LSWF, WIPL…FAMI, LFFN…SFAA, VTNS…DFFW, LGWG…LYLV, and QLST…YYIF. NADP(+) contacts are provided by residues lysine 354, arginine 358, leucine 391, tryptophan 396, and 403–404; that span reads NY. Residues 416 to 436 traverse the membrane as a helical segment; the sequence is LACGGGHLLPYFYIIYMTILL. NADP(+) contacts are provided by residues aspartate 443, 447–451, and tyrosine 458; that span reads CANKY.

It belongs to the ERG4/ERG24 family. As to quaternary structure, interacts with DHCR24; this interaction regulates DHCR7 activity. Interacts with TMEM147. In terms of tissue distribution, highest expression is detected in liver, followed by kidney and brain.

The protein localises to the endoplasmic reticulum membrane. The enzyme catalyses cholesterol + NADP(+) = 7-dehydrocholesterol + NADPH + H(+). It carries out the reaction 7-dehydrodesmosterol + NADPH + H(+) = desmosterol + NADP(+). The catalysed reaction is 5,6alpha-epoxy-5alpha-cholestan-3beta-ol + H2O = 5alpha-cholestane-3beta,5,6beta-triol. It catalyses the reaction 5,6beta-epoxy-5beta-cholestan-3beta-ol + H2O = 5alpha-cholestane-3beta,5,6beta-triol. Its pathway is steroid biosynthesis; cholesterol biosynthesis. Its function is as follows. Oxidoreductase that catalyzes the last step of the cholesterol synthesis pathway, which transforms cholesta-5,7-dien-3beta-ol (7-dehydrocholesterol,7-DHC) into cholesterol by reducing the C7-C8 double bond of its sterol core. Can also metabolize cholesta-5,7,24-trien-3beta-ol (7-dehydrodemosterol, 7-DHD) to desmosterol, which is then metabolized by the Delta(24)-sterol reductase (DHCR24) to cholesterol. Modulates ferroptosis (a form of regulated cell death driven by iron-dependent lipid peroxidation) through the metabolic breakdown of the anti-ferroptotic metabolites 7-DHC and 7-DHD which, when accumulated, divert the propagation of peroxyl radical-mediated damage from phospholipid components to its sterol core, protecting plasma and mitochondrial membranes from phospholipid autoxidation. In terms of biological role, component of the microsomal antiestrogen binding site (AEBS), a multiproteic complex at the ER membrane that consists of an association between cholestenol Delta-isomerase/EBP and DHCR7. This complex is responsible for cholesterol-5,6-epoxide hydrolase (ChEH) activity, which consists in the hydration of cholesterol-5,6-epoxides (5,6-EC) into cholestane-3beta,5alpha,6beta-triol (CT). The precise role of each component of this complex has not been described yet. This Rattus norvegicus (Rat) protein is 7-dehydrocholesterol reductase (Dhcr7).